The following is a 410-amino-acid chain: Serine hydroxymethyltransferase (410 aa).

(6S)-5,6,7,8-tetrahydrofolate contacts are provided by residues Leu116 and 120–122 (GHL). Lys225 bears the N6-(pyridoxal phosphate)lysine mark. 349 to 351 (SPF) is a (6S)-5,6,7,8-tetrahydrofolate binding site.

The protein belongs to the SHMT family. Homodimer. Pyridoxal 5'-phosphate is required as a cofactor.

It is found in the cytoplasm. It carries out the reaction (6R)-5,10-methylene-5,6,7,8-tetrahydrofolate + glycine + H2O = (6S)-5,6,7,8-tetrahydrofolate + L-serine. It functions in the pathway one-carbon metabolism; tetrahydrofolate interconversion. Its pathway is amino-acid biosynthesis; glycine biosynthesis; glycine from L-serine: step 1/1. In terms of biological role, catalyzes the reversible interconversion of serine and glycine with tetrahydrofolate (THF) serving as the one-carbon carrier. This reaction serves as the major source of one-carbon groups required for the biosynthesis of purines, thymidylate, methionine, and other important biomolecules. Also exhibits THF-independent aldolase activity toward beta-hydroxyamino acids, producing glycine and aldehydes, via a retro-aldol mechanism. The chain is Serine hydroxymethyltransferase from Leuconostoc citreum (strain KM20).